Here is a 968-residue protein sequence, read N- to C-terminus: AP2-associated protein kinase 1 (968 aa).

The residue at position 1 (methionine 1) is an N-acetylmethionine. The segment covering methionine 1–glutamine 11 has biased composition (basic and acidic residues). Residues methionine 1–glycine 25 form a disordered region. A compositionally biased stretch (gly residues) spans glycine 12–glycine 25. Residue serine 14 is modified to Phosphoserine. In terms of domain architecture, Protein kinase spans valine 46 to leucine 315. Residues leucine 52 to valine 60 and lysine 74 each bind ATP. Aspartate 176 functions as the Proton acceptor in the catalytic mechanism. Tyrosine 234 is modified (phosphotyrosine). Serine 235 is subject to Phosphoserine. 2 disordered regions span residues serine 327–proline 485 and isoleucine 578–arginine 640. 2 positions are modified to phosphothreonine: threonine 354 and threonine 389. Arginine 391 carries the post-translational modification Omega-N-methylarginine. The segment covering glutamine 437–alanine 448 has biased composition (pro residues). Low complexity-rich tracts occupy residues proline 449–glutamine 472 and isoleucine 578–serine 589. A Phosphothreonine modification is found at threonine 613. Phosphoserine is present on serine 625. Threonine 627 bears the Phosphothreonine mark. 4 positions are modified to phosphoserine: serine 630, serine 631, serine 644, and serine 657. Threonine 660 carries the post-translational modification Phosphothreonine. The interval serine 671–aspartate 708 is disordered. A compositionally biased stretch (polar residues) spans threonine 679–asparagine 703. The residue at position 694 (tyrosine 694) is a Phosphotyrosine. Residues serine 738, serine 853, serine 944, and serine 945 each carry the phosphoserine modification. Positions glutamate 830–aspartate 967 are clathrin-binding domain (CBD). 2 disordered regions span residues leucine 843–arginine 862 and proline 929–leucine 952. Over residues leucine 851–arginine 862 the composition is skewed to polar residues. Positions glycine 938–serine 951 are enriched in low complexity.

The protein belongs to the protein kinase superfamily. Ser/Thr protein kinase family. Interacts (via CBD domain) with clathrin. Interacts with AP-2 complex. Interacts with NUMB. Interacts with alpha-adaptin. Interacts with EPS15. Interacts with membrane-bound activated NOTCH1 but not with the inactive full-length form of NOTCH1. Preferentially interacts with monoubiquitinated activated NOTCH1 compared to the non-ubiquitinated form. Autophosphorylated.

Its subcellular location is the cell membrane. The protein resides in the membrane. It is found in the clathrin-coated pit. It localises to the presynapse. The enzyme catalyses L-seryl-[protein] + ATP = O-phospho-L-seryl-[protein] + ADP + H(+). The catalysed reaction is L-threonyl-[protein] + ATP = O-phospho-L-threonyl-[protein] + ADP + H(+). With respect to regulation, stimulated by clathrin. Its function is as follows. Regulates clathrin-mediated endocytosis by phosphorylating the AP2M1/mu2 subunit of the adaptor protein complex 2 (AP-2) which ensures high affinity binding of AP-2 to cargo membrane proteins during the initial stages of endocytosis. Preferentially, may phosphorylate substrates on threonine residues. Regulates phosphorylation of other AP-2 subunits as well as AP-2 localization and AP-2-mediated internalization of ligand complexes. Phosphorylates NUMB and regulates its cellular localization, promoting NUMB localization to endosomes. Binds to and stabilizes the activated form of NOTCH1, increases its localization in endosomes and regulates its transcriptional activity. This Sus scrofa (Pig) protein is AP2-associated protein kinase 1 (AAK1).